A 226-amino-acid polypeptide reads, in one-letter code: MRKNWTDEEIRVLQNNYEYVDTEIIANFLNRSYHSIKNKAVRLGISKNSVWTEDEDIYLEYFVYENDDNISKAAEFLGRTKDAVINRLAKLRKRDSSVSFIRRPWTKKEDEILKNNYIIMSNDQLAERLRRTKASVAARKVLLGLTNKHMSKKDDKMIRHLGNQGYTIKEISAEMNLPYCLIKNYIRNHRINYRRESKNEMNGWRKEADATYSHYINSKKIKEEQA.

It to L.innocua lin1255, lin1742 and lin2408.

This is an uncharacterized protein from Listeria innocua serovar 6a (strain ATCC BAA-680 / CLIP 11262).